Consider the following 376-residue polypeptide: Glutamate 5-kinase (376 aa).

Residue K15 participates in ATP binding. Substrate contacts are provided by S56, D143, and N155. Position 175-176 (175-176) interacts with ATP; sequence SD. The PUA domain maps to 281 to 358; it reads KGTLTIDAGA…PDVMSILGVS (78 aa).

This sequence belongs to the glutamate 5-kinase family.

It is found in the cytoplasm. It catalyses the reaction L-glutamate + ATP = L-glutamyl 5-phosphate + ADP. Its pathway is amino-acid biosynthesis; L-proline biosynthesis; L-glutamate 5-semialdehyde from L-glutamate: step 1/2. Catalyzes the transfer of a phosphate group to glutamate to form L-glutamate 5-phosphate. The sequence is that of Glutamate 5-kinase from Rhodopseudomonas palustris (strain HaA2).